The chain runs to 726 residues: Putative RNA polymerase II subunit B1 CTD phosphatase RPAP2 homolog (726 aa).

Residues 43–131 (AAASLLSGPD…LPPDRPFGVS (89 aa)) form an RTR1-type zinc finger. The Zn(2+) site is built by cysteine 66, cysteine 71, cysteine 107, and cysteine 111. Positions 209-218 (VGGPKKEAKQ) are enriched in basic and acidic residues. 2 disordered regions span residues 209 to 242 (VGGPKKEAKQNDACSAEQSSNINVDSRNASSGES) and 294 to 323 (KKDKKKNKAAKGTSRVGKSKPAKRPVGRDG). A compositionally biased stretch (polar residues) spans 220–241 (DACSAEQSSNINVDSRNASSGE).

The protein belongs to the RPAP2 family.

The protein resides in the nucleus. It carries out the reaction O-phospho-L-seryl-[protein] + H2O = L-seryl-[protein] + phosphate. It catalyses the reaction O-phospho-L-threonyl-[protein] + H2O = L-threonyl-[protein] + phosphate. Functionally, putative RNA polymerase II subunit B1 C-terminal domain (CTD) phosphatase involved in RNA polymerase II transcription regulation. The protein is Putative RNA polymerase II subunit B1 CTD phosphatase RPAP2 homolog of Oryza sativa subsp. japonica (Rice).